The following is a 146-amino-acid chain: Putative type II restriction enzyme MjaORF1200P (146 aa).

It to A.pernix APE2001.

The enzyme catalyses Endonucleolytic cleavage of DNA to give specific double-stranded fragments with terminal 5'-phosphates.. In terms of biological role, a putative type II restriction enzyme, its methylase would be M.MjaORF1200P (AC Q58600). The chain is Putative type II restriction enzyme MjaORF1200P from Methanocaldococcus jannaschii (strain ATCC 43067 / DSM 2661 / JAL-1 / JCM 10045 / NBRC 100440) (Methanococcus jannaschii).